A 79-amino-acid chain; its full sequence is uncharacterized protein (79 aa).

This is an uncharacterized protein from Bacillus subtilis (strain 168).